The primary structure comprises 368 residues: G-protein coupled receptor 183-A (368 aa).

At 1 to 27 (METTSANFTQNDSNVCTNLYNHRGWAQ) the chain is on the extracellular side. 2 N-linked (GlcNAc...) asparagine glycosylation sites follow: N7 and N11. The chain crosses the membrane as a helical span at residues 28–53 (YFLPAMYSLICIVGLLGNVLALHVIW). Residues 54 to 73 (PNLKKINSTTLYSANLVVSD) are Cytoplasmic-facing. A helical membrane pass occupies residues 74 to 91 (ILFSLALPLRVVYYARGF). The Extracellular segment spans residues 92-101 (DWPMGEGLCK). C100 and C178 are joined by a disulfide. A helical transmembrane segment spans residues 102 to 123 (AVALLFYINMYAGVNFMTCLSV). The Cytoplasmic portion of the chain corresponds to 124 to 145 (DRFIAVVLPLRFSRFRKVQKVR). The chain crosses the membrane as a helical span at residues 146 to 164 (YICGVVWVVVLMQTLPLLS). Over 165–189 (MPMTNIEQSGHITCMEYPNFEKIDN) the chain is Extracellular. Residues 190–212 (LPVMLIGAVVLGFGIPVITILVC) form a helical membrane-spanning segment. At 213–238 (YTALCLKLRHLAKSNKLTEKSGRSSK) the chain is on the cytoplasmic side. A helical transmembrane segment spans residues 239–262 (AIGVICTVILVFVVCYSPYHVDLL). At 263 to 282 (QYMIKKLRYDPDCSELHKFQ) the chain is on the extracellular side. The chain crosses the membrane as a helical span at residues 283–307 (ISLHITVCFMNLNSCLDPFIYFFAC). The Cytoplasmic portion of the chain corresponds to 308–368 (KGYKKKVLKL…SSVLLNSLEQ (61 aa)).

Belongs to the G-protein coupled receptor 1 family.

The protein localises to the cell membrane. Its function is as follows. G-protein coupled receptor expressed in lymphocytes that acts as a chemotactic receptor for B-cells, T-cells, splenic dendritic cells, monocytes/macrophages and astrocytes. Receptor for oxysterol 7-alpha,25-dihydroxycholesterol (7-alpha,25-OHC) and other related oxysterols. Mediates cell positioning and movement of a number of cells by binding the 7-alpha,25-OHC ligand that forms a chemotactic gradient. Binding of 7-alpha,25-OHC mediates the correct localization of B-cells during humoral immune responses. The polypeptide is G-protein coupled receptor 183-A (gpr183a) (Danio rerio (Zebrafish)).